The sequence spans 1640 residues: Clathrin heavy chain 2 (1640 aa).

Ala2 is modified (N-acetylalanine). A globular terminal domain region spans residues 2–479 (AQILPVRFQE…TDPMLALSVY (478 aa)). 7 WD40-like repeat regions span residues 24-67 (NIGF…RPIS), 68-107 (AESAIMNPASKVIALKAGKTLQIFNIEMKSKMKAHTMAEE), 108-149 (VIFW…TSLV), 150-195 (GCQV…QPIE), 196-257 (GHAA…PEAQ), 258-301 (NDFP…ISAD), and 302-330 (TIFVTAPHKPTSGIIGVNKKGQVLSVCVE). Ser67 carries the phosphoserine modification. The residue at position 184 (Tyr184) is a Phosphotyrosine. At Thr394 the chain carries Phosphothreonine. Residues 449–465 (EKWLKEDKLECSEELGD) form a binding site for the uncoating ATPase, involved in lattice disassembly region. The flexible linker stretch occupies residues 480–523 (LRANVPSKVIQCFAETGQFQKIVLYAKKVGYTPDWIFLLRGVMK). The segment at 524-634 (ISPEQGLQFS…QALEHYTDLY (111 aa)) is distal segment. Positions 524-1640 (ISPEQGLQFS…PLVFDFDGHE (1117 aa)) are heavy chain arm. 7 CHCR repeats span residues 537 to 683 (VQDE…QLCV), 686 to 828 (ASKY…SEEV), 833 to 972 (IMAV…QLID), 979 to 1124 (LSET…VKEA), 1128 to 1269 (YIRG…FRFA), 1274 to 1420 (LHIV…LLIN), and 1423 to 1566 (LLVL…RECF). Tyr634 bears the Phosphotyrosine mark. The proximal segment stretch occupies residues 639–1640 (AVVHTHLLNP…PLVFDFDGHE (1002 aa)). An N6-succinyllysine modification is found at Lys737. Lys856 carries the N6-acetyllysine modification. Residue Tyr899 is modified to Phosphotyrosine. At Ser1167 the chain carries Phosphoserine. Tyr1206 is subject to Phosphotyrosine. The interval 1213-1522 (AAKLLYSNVS…YLYKGNNWWA (310 aa)) is involved in binding clathrin light chain. Ser1229 bears the Phosphoserine mark. Position 1441 is an N6-acetyllysine; alternate (Lys1441). Lys1441 bears the N6-succinyllysine; alternate mark. Phosphotyrosine occurs at positions 1477 and 1487. Phosphoserine is present on Ser1494. Residue Lys1501 is modified to N6-acetyllysine. The segment at 1551 to 1640 (QKLLQWFLEE…PLVFDFDGHE (90 aa)) is trimerization.

This sequence belongs to the clathrin heavy chain family. Clathrin triskelions, composed of 3 heavy chains and 3 light chains, are the basic subunits of the clathrin coat. In the presence of light chains, hub assembly is influenced by both the pH and the concentration of calcium. May interact with OCRL. Interacts with AFTPH/aftiphilin. As to expression, maximal levels in skeletal muscle. High levels in heart and testis. Low expression detected in all other tissues.

It localises to the cytoplasmic vesicle membrane. Its subcellular location is the membrane. The protein resides in the coated pit. In terms of biological role, clathrin is the major protein of the polyhedral coat of coated pits and vesicles. Two different adapter protein complexes link the clathrin lattice either to the plasma membrane or to the trans-Golgi network. This Homo sapiens (Human) protein is Clathrin heavy chain 2 (CLTCL1).